Reading from the N-terminus, the 343-residue chain is Twinfilin (343 aa).

2 ADF-H domains span residues 4–139 (QTGI…KHKV) and 177–312 (GINC…EELH). A disordered region spans residues 314-343 (RKLNLRPQFSKPKGPPSRGAKRLTKPQAVE).

Belongs to the actin-binding proteins ADF family. Twinfilin subfamily. In terms of assembly, interacts with G-actin; ADP-actin form.

It localises to the cytoplasm. The protein localises to the cytoskeleton. It is found in the cell cortex. In terms of biological role, actin-binding protein involved in motile and morphological processes. Inhibits actin polymerization, likely by sequestering G-actin. This is Twinfilin (twf) from Anopheles gambiae (African malaria mosquito).